The following is a 201-amino-acid chain: Retinol-binding protein 4 (201 aa).

The signal sequence occupies residues 1-18 (MEWVWALVLLAALGSGRG). Cystine bridges form between Cys22–Cys178, Cys88–Cys192, and Cys138–Cys147. Gln116 contacts substrate. Arg139 carries the post-translational modification Omega-N-methylarginine.

Belongs to the calycin superfamily. Lipocalin family. As to quaternary structure, interacts with TTR. Interaction with TTR prevents its loss by filtration through the kidney glomeruli. Interacts with STRA6.

Its subcellular location is the secreted. In terms of biological role, retinol-binding protein that mediates retinol transport in blood plasma. Delivers retinol from the liver stores to the peripheral tissues. Transfers the bound all-trans retinol to STRA6, that then facilitates retinol transport across the cell membrane. The chain is Retinol-binding protein 4 (RBP4) from Oryctolagus cuniculus (Rabbit).